A 313-amino-acid polypeptide reads, in one-letter code: Fructose-1,6-bisphosphatase class 1 (313 aa).

Mg(2+)-binding residues include E90, D111, L113, and D114. Substrate-binding positions include D114 to S117, Y222, and K253. E259 contributes to the Mg(2+) binding site.

This sequence belongs to the FBPase class 1 family. Homotetramer. Mg(2+) is required as a cofactor.

It is found in the cytoplasm. The enzyme catalyses beta-D-fructose 1,6-bisphosphate + H2O = beta-D-fructose 6-phosphate + phosphate. It participates in carbohydrate biosynthesis; gluconeogenesis. The sequence is that of Fructose-1,6-bisphosphatase class 1 from Geotalea uraniireducens (strain Rf4) (Geobacter uraniireducens).